Consider the following 263-residue polypeptide: 3-methyl-2-oxobutanoate hydroxymethyltransferase (263 aa).

Positions 43 and 82 each coordinate Mg(2+). Residues 43–44 (DS), Asp-82, and Lys-111 contribute to the 3-methyl-2-oxobutanoate site. Mg(2+) is bound at residue Glu-113. Catalysis depends on Glu-179, which acts as the Proton acceptor.

This sequence belongs to the PanB family. As to quaternary structure, homodecamer; pentamer of dimers. The cofactor is Mg(2+).

The protein resides in the cytoplasm. It carries out the reaction 3-methyl-2-oxobutanoate + (6R)-5,10-methylene-5,6,7,8-tetrahydrofolate + H2O = 2-dehydropantoate + (6S)-5,6,7,8-tetrahydrofolate. The protein operates within cofactor biosynthesis; (R)-pantothenate biosynthesis; (R)-pantoate from 3-methyl-2-oxobutanoate: step 1/2. Catalyzes the reversible reaction in which hydroxymethyl group from 5,10-methylenetetrahydrofolate is transferred onto alpha-ketoisovalerate to form ketopantoate. In Neisseria gonorrhoeae (strain ATCC 700825 / FA 1090), this protein is 3-methyl-2-oxobutanoate hydroxymethyltransferase.